The sequence spans 229 residues: Large ribosomal subunit protein uL3 (229 aa).

N5-methylglutamine is present on Gln151.

Belongs to the universal ribosomal protein uL3 family. As to quaternary structure, part of the 50S ribosomal subunit. Forms a cluster with proteins L14 and L19. In terms of processing, methylated by PrmB.

In terms of biological role, one of the primary rRNA binding proteins, it binds directly near the 3'-end of the 23S rRNA, where it nucleates assembly of the 50S subunit. This Paramagnetospirillum magneticum (strain ATCC 700264 / AMB-1) (Magnetospirillum magneticum) protein is Large ribosomal subunit protein uL3.